Reading from the N-terminus, the 418-residue chain is Tyrosine--tRNA ligase (418 aa).

Position 34 (Tyr34) interacts with L-tyrosine. A 'HIGH' region motif is present at residues 39 to 48 (PTADSLHLGH). Residues Tyr169 and Gln173 each coordinate L-tyrosine. The 'KMSKS' region motif lies at 229 to 233 (KFGKS). Lys232 is an ATP binding site. Positions 352–418 (LNLVDMLVTA…GKKKYAVLTY (67 aa)) constitute an S4 RNA-binding domain.

Belongs to the class-I aminoacyl-tRNA synthetase family. TyrS type 1 subfamily. Homodimer.

It localises to the cytoplasm. The enzyme catalyses tRNA(Tyr) + L-tyrosine + ATP = L-tyrosyl-tRNA(Tyr) + AMP + diphosphate + H(+). In terms of biological role, catalyzes the attachment of tyrosine to tRNA(Tyr) in a two-step reaction: tyrosine is first activated by ATP to form Tyr-AMP and then transferred to the acceptor end of tRNA(Tyr). The sequence is that of Tyrosine--tRNA ligase from Streptococcus pyogenes serotype M6 (strain ATCC BAA-946 / MGAS10394).